A 253-amino-acid chain; its full sequence is Adapter protein MecA (253 aa).

Belongs to the MecA family. In terms of assembly, homodimer.

Its function is as follows. Enables the recognition and targeting of unfolded and aggregated proteins to the ClpC protease or to other proteins involved in proteolysis. The polypeptide is Adapter protein MecA (Streptococcus pyogenes serotype M18 (strain MGAS8232)).